The primary structure comprises 244 residues: tRNA (guanine-N(1)-)-methyltransferase (244 aa).

Residues glycine 120 and 140-145 (IGDYIL) each bind S-adenosyl-L-methionine.

Belongs to the RNA methyltransferase TrmD family. Homodimer.

It localises to the cytoplasm. It carries out the reaction guanosine(37) in tRNA + S-adenosyl-L-methionine = N(1)-methylguanosine(37) in tRNA + S-adenosyl-L-homocysteine + H(+). Functionally, specifically methylates guanosine-37 in various tRNAs. This Brucella canis (strain ATCC 23365 / NCTC 10854 / RM-666) protein is tRNA (guanine-N(1)-)-methyltransferase.